Here is a 464-residue protein sequence, read N- to C-terminus: Siroheme synthase (464 aa).

Residues 1-203 (MKYLPLFHNL…GQGAEAERLL (203 aa)) form a precorrin-2 dehydrogenase /sirohydrochlorin ferrochelatase region. NAD(+) contacts are provided by residues 22 to 23 (EI) and 43 to 44 (PE). A Phosphoserine modification is found at serine 128. The tract at residues 216–464 (GEVYLVGAGP…AWFEGAQGQI (249 aa)) is uroporphyrinogen-III C-methyltransferase. An S-adenosyl-L-methionine-binding site is contributed by proline 225. The active-site Proton acceptor is aspartate 248. Catalysis depends on lysine 270, which acts as the Proton donor. Residues 301–303 (GGD), isoleucine 306, 331–332 (TA), methionine 383, and glycine 412 contribute to the S-adenosyl-L-methionine site.

It in the N-terminal section; belongs to the precorrin-2 dehydrogenase / sirohydrochlorin ferrochelatase family. The protein in the C-terminal section; belongs to the precorrin methyltransferase family.

The enzyme catalyses uroporphyrinogen III + 2 S-adenosyl-L-methionine = precorrin-2 + 2 S-adenosyl-L-homocysteine + H(+). It carries out the reaction precorrin-2 + NAD(+) = sirohydrochlorin + NADH + 2 H(+). The catalysed reaction is siroheme + 2 H(+) = sirohydrochlorin + Fe(2+). It participates in cofactor biosynthesis; adenosylcobalamin biosynthesis; precorrin-2 from uroporphyrinogen III: step 1/1. It functions in the pathway cofactor biosynthesis; adenosylcobalamin biosynthesis; sirohydrochlorin from precorrin-2: step 1/1. The protein operates within porphyrin-containing compound metabolism; siroheme biosynthesis; precorrin-2 from uroporphyrinogen III: step 1/1. Its pathway is porphyrin-containing compound metabolism; siroheme biosynthesis; siroheme from sirohydrochlorin: step 1/1. It participates in porphyrin-containing compound metabolism; siroheme biosynthesis; sirohydrochlorin from precorrin-2: step 1/1. Multifunctional enzyme that catalyzes the SAM-dependent methylations of uroporphyrinogen III at position C-2 and C-7 to form precorrin-2 via precorrin-1. Then it catalyzes the NAD-dependent ring dehydrogenation of precorrin-2 to yield sirohydrochlorin. Finally, it catalyzes the ferrochelation of sirohydrochlorin to yield siroheme. The sequence is that of Siroheme synthase from Pseudomonas fluorescens (strain Pf0-1).